The primary structure comprises 450 residues: Hyaluronidase-1 (450 aa).

Residues 1–35 form the signal peptide; sequence MRPFSLEVSLHLPWAMAAHLLPVCTLFLNLLSMTQ. 2 disulfide bridges follow: Cys-58–Cys-348 and Cys-222–Cys-236. The N-linked (GlcNAc...) asparagine glycan is linked to Asn-85. The active-site Proton donor is Glu-146. Asn-231 and Asn-365 each carry an N-linked (GlcNAc...) asparagine glycan. 3 cysteine pairs are disulfide-bonded: Cys-373/Cys-384, Cys-378/Cys-433, and Cys-435/Cys-444. N-linked (GlcNAc...) asparagine glycosylation occurs at Asn-398. One can recognise an EGF-like domain in the interval 433–444; that stretch reads CRCYRGWRGTRC.

It belongs to the glycosyl hydrolase 56 family.

Its subcellular location is the secreted. It is found in the lysosome. It carries out the reaction Random hydrolysis of (1-&gt;4)-linkages between N-acetyl-beta-D-glucosamine and D-glucuronate residues in hyaluronate.. Its function is as follows. May have a role in promoting tumor progression. May block the TGFB1-enhanced cell growth. The protein is Hyaluronidase-1 (HYAL1) of Bos taurus (Bovine).